Consider the following 205-residue polypeptide: MQKSYIKLLVLGDSKTGKTTMMMTYSTGSFPTGYVPSHVDATSLDIEYNKQVCHVGFWDSSALAEFDNTRPSTYPNTNVIILCFSIDSPTSFENVSKKWIPEIRQYAPSIHTPIILLGTKCDLREDENTINLLKENNQMPPISYKQGLALSKEIKATMYLECSSLCNQGVNEIFKQVVRCHLYCKDGVLNDPTTTTSNTSKCIIQ.

Residue 12–19 coordinates GTP; it reads GDSKTGKT. Positions 34 to 42 match the Effector region motif; it reads YVPSHVDAT. Residues 59 to 63 and 119 to 122 each bind GTP; these read DSSAL and TKCD. A Cysteine methyl ester modification is found at C202. C202 is lipidated: S-geranylgeranyl cysteine. Positions 203–205 are cleaved as a propeptide — removed in mature form; the sequence is IIQ.

The protein belongs to the small GTPase superfamily. Rho family.

It is found in the cell membrane. This Dictyostelium discoideum (Social amoeba) protein is Rho-related protein racI (racI).